The sequence spans 290 residues: Glycine--tRNA ligase alpha subunit (290 aa).

This sequence belongs to the class-II aminoacyl-tRNA synthetase family. Tetramer of two alpha and two beta subunits.

Its subcellular location is the cytoplasm. It carries out the reaction tRNA(Gly) + glycine + ATP = glycyl-tRNA(Gly) + AMP + diphosphate. The sequence is that of Glycine--tRNA ligase alpha subunit from Fusobacterium nucleatum subsp. nucleatum (strain ATCC 25586 / DSM 15643 / BCRC 10681 / CIP 101130 / JCM 8532 / KCTC 2640 / LMG 13131 / VPI 4355).